Reading from the N-terminus, the 283-residue chain is 4-diphosphocytidyl-2-C-methyl-D-erythritol kinase (283 aa).

Residue Lys10 is part of the active site. 95–105 (PVAAGLGGGSS) contacts ATP. The active site involves Asp137.

Belongs to the GHMP kinase family. IspE subfamily.

It catalyses the reaction 4-CDP-2-C-methyl-D-erythritol + ATP = 4-CDP-2-C-methyl-D-erythritol 2-phosphate + ADP + H(+). Its pathway is isoprenoid biosynthesis; isopentenyl diphosphate biosynthesis via DXP pathway; isopentenyl diphosphate from 1-deoxy-D-xylulose 5-phosphate: step 3/6. In terms of biological role, catalyzes the phosphorylation of the position 2 hydroxy group of 4-diphosphocytidyl-2C-methyl-D-erythritol. In Pediococcus pentosaceus (strain ATCC 25745 / CCUG 21536 / LMG 10740 / 183-1w), this protein is 4-diphosphocytidyl-2-C-methyl-D-erythritol kinase.